We begin with the raw amino-acid sequence, 318 residues long: ATP synthase gamma chain (318 aa).

This sequence belongs to the ATPase gamma chain family. As to quaternary structure, F-type ATPases have 2 components, CF(1) - the catalytic core - and CF(0) - the membrane proton channel. CF(1) has five subunits: alpha(3), beta(3), gamma(1), delta(1), epsilon(1). CF(0) has three main subunits: a, b and c.

Its subcellular location is the cell membrane. In terms of biological role, produces ATP from ADP in the presence of a proton gradient across the membrane. The gamma chain is believed to be important in regulating ATPase activity and the flow of protons through the CF(0) complex. This chain is ATP synthase gamma chain, found in Lactobacillus johnsonii (strain CNCM I-12250 / La1 / NCC 533).